The chain runs to 393 residues: MGYYSLTEITAVQYAKDHGYFEAKANVVCHEIGDGNLNYVFKLDDGEKSIIIKQALPYAKVVGESWPLSIKRATIESKALQIFAQYVPDYVPAVYSHDEELAITVIEDLSRLTITRKGLIGGEEYPLLSQHIGRFLAHVLFYTSDFGLQSEEKRVLEGTFVNPDLCKITEDLVFTDPFGHYDTNDYEPDLQLVVDELWSDKTLKLKVAQYKYKFLTRKETLIHGDLHTGSIFSSPSETKVIDPEFATYGPFGFDIGQFIANLLLNALSREEEKRSVLFFHIEKTWSYFVETFTKLWIGEGVEVYTKEKQWLPIILQNIFTDAVGFAGCELIRRTIGLAHVADLDEIENKETRIQAKKQALSLGKELIKYESKSADIQLFRTLFQQTVSGGVKA.

Residues asparagine 38, lysine 53, and 107–109 (EDL) each bind ATP. Residue aspartate 225 coordinates substrate. 242–244 (DPE) is a binding site for ATP. Arginine 332 provides a ligand contact to substrate.

Belongs to the methylthioribose kinase family. In terms of assembly, homodimer.

It carries out the reaction 5-(methylsulfanyl)-D-ribose + ATP = 5-(methylsulfanyl)-alpha-D-ribose 1-phosphate + ADP + H(+). Its pathway is amino-acid biosynthesis; L-methionine biosynthesis via salvage pathway; S-methyl-5-thio-alpha-D-ribose 1-phosphate from S-methyl-5'-thioadenosine (hydrolase route): step 2/2. Functionally, catalyzes the phosphorylation of methylthioribose into methylthioribose-1-phosphate. In Bacillus cereus (strain G9842), this protein is Methylthioribose kinase.